We begin with the raw amino-acid sequence, 317 residues long: Putative ribose-phosphate pyrophosphokinase (317 aa).

Residues 211-224 (GRDVIVLDDEIAKG) form a binding of phosphoribosylpyrophosphate region.

Belongs to the ribose-phosphate pyrophosphokinase family.

The enzyme catalyses D-ribose 5-phosphate + ATP = 5-phospho-alpha-D-ribose 1-diphosphate + AMP + H(+). The sequence is that of Putative ribose-phosphate pyrophosphokinase from Streptomyces coelicolor (strain ATCC BAA-471 / A3(2) / M145).